Here is a 122-residue protein sequence, read N- to C-terminus: Glycine cleavage system H protein (122 aa).

The region spanning 19 to 101 (MVTVGVTHYA…ETEGWLWKMT (83 aa)) is the Lipoyl-binding domain. Position 60 is an N6-lipoyllysine (K60).

It belongs to the GcvH family. The glycine cleavage system is composed of four proteins: P, T, L and H. (R)-lipoate serves as cofactor.

In terms of biological role, the glycine cleavage system catalyzes the degradation of glycine. The H protein shuttles the methylamine group of glycine from the P protein to the T protein. The sequence is that of Glycine cleavage system H protein from Bartonella tribocorum (strain CIP 105476 / IBS 506).